The primary structure comprises 55 residues: U17-myrmicitoxin-Mri1b (55 aa).

Positions 1–31 (MENSRTSTFTAYVTVAFLLISTFVTMVVTES) are cleaved as a signal peptide. Gln32 is subject to Pyrrolidone carboxylic acid.

In terms of processing, contains 1 disulfide bond. In terms of tissue distribution, expressed by the venom gland.

Its subcellular location is the secreted. The sequence is that of U17-myrmicitoxin-Mri1b from Manica rubida (European giant red ant).